Consider the following 1343-residue polypeptide: DNA-directed RNA polymerase subunit beta (1343 aa).

The protein belongs to the RNA polymerase beta chain family. The RNAP catalytic core consists of 2 alpha, 1 beta, 1 beta' and 1 omega subunit. When a sigma factor is associated with the core the holoenzyme is formed, which can initiate transcription.

The catalysed reaction is RNA(n) + a ribonucleoside 5'-triphosphate = RNA(n+1) + diphosphate. Functionally, DNA-dependent RNA polymerase catalyzes the transcription of DNA into RNA using the four ribonucleoside triphosphates as substrates. In Shewanella pealeana (strain ATCC 700345 / ANG-SQ1), this protein is DNA-directed RNA polymerase subunit beta.